We begin with the raw amino-acid sequence, 396 residues long: NADH-quinone oxidoreductase subunit D (396 aa).

It belongs to the complex I 49 kDa subunit family. In terms of assembly, NDH-1 is composed of 14 different subunits. Subunits NuoB, C, D, E, F, and G constitute the peripheral sector of the complex.

It localises to the cell inner membrane. The enzyme catalyses a quinone + NADH + 5 H(+)(in) = a quinol + NAD(+) + 4 H(+)(out). Its function is as follows. NDH-1 shuttles electrons from NADH, via FMN and iron-sulfur (Fe-S) centers, to quinones in the respiratory chain. The immediate electron acceptor for the enzyme in this species is believed to be ubiquinone. Couples the redox reaction to proton translocation (for every two electrons transferred, four hydrogen ions are translocated across the cytoplasmic membrane), and thus conserves the redox energy in a proton gradient. This Orientia tsutsugamushi (strain Ikeda) (Rickettsia tsutsugamushi) protein is NADH-quinone oxidoreductase subunit D.